Reading from the N-terminus, the 350-residue chain is Probable dual-specificity RNA methyltransferase RlmN (350 aa).

Glu93 acts as the Proton acceptor in catalysis. The 229-residue stretch at 99 to 327 folds into the Radical SAM core domain; that stretch reads SSKRLTVCVS…VSVRYSRGVQ (229 aa). Cys106 and Cys332 are disulfide-bonded. Residues Cys113, Cys117, and Cys120 each coordinate [4Fe-4S] cluster. Residues 160–161, Ser190, 213–215, and Asn289 each bind S-adenosyl-L-methionine; these read GE and SLH. The active-site S-methylcysteine intermediate is the Cys332.

It belongs to the radical SAM superfamily. RlmN family. The cofactor is [4Fe-4S] cluster.

The protein localises to the cytoplasm. It carries out the reaction adenosine(2503) in 23S rRNA + 2 reduced [2Fe-2S]-[ferredoxin] + 2 S-adenosyl-L-methionine = 2-methyladenosine(2503) in 23S rRNA + 5'-deoxyadenosine + L-methionine + 2 oxidized [2Fe-2S]-[ferredoxin] + S-adenosyl-L-homocysteine. The enzyme catalyses adenosine(37) in tRNA + 2 reduced [2Fe-2S]-[ferredoxin] + 2 S-adenosyl-L-methionine = 2-methyladenosine(37) in tRNA + 5'-deoxyadenosine + L-methionine + 2 oxidized [2Fe-2S]-[ferredoxin] + S-adenosyl-L-homocysteine. Specifically methylates position 2 of adenine 2503 in 23S rRNA and position 2 of adenine 37 in tRNAs. The chain is Probable dual-specificity RNA methyltransferase RlmN from Synechocystis sp. (strain ATCC 27184 / PCC 6803 / Kazusa).